A 259-amino-acid polypeptide reads, in one-letter code: Hemin import ATP-binding protein HmuV (259 aa).

Positions 8 to 242 constitute an ABC transporter domain; that stretch reads ISANNISYRI…KMIENVYGHK (235 aa). 40–47 is an ATP binding site; sequence GPNGAGKS.

It belongs to the ABC transporter superfamily. Heme (hemin) importer (TC 3.A.1.14.5) family. As to quaternary structure, the complex is composed of two ATP-binding proteins (HmuV), two transmembrane proteins (HmuU) and a solute-binding protein (HmuT).

The protein localises to the cell inner membrane. Functionally, part of the ABC transporter complex HmuTUV involved in hemin import. Responsible for energy coupling to the transport system. This Aliivibrio fischeri (strain ATCC 700601 / ES114) (Vibrio fischeri) protein is Hemin import ATP-binding protein HmuV.